The chain runs to 254 residues: Phosphoribosylaminoimidazole-succinocarboxamide synthase (254 aa).

It belongs to the SAICAR synthetase family.

It catalyses the reaction 5-amino-1-(5-phospho-D-ribosyl)imidazole-4-carboxylate + L-aspartate + ATP = (2S)-2-[5-amino-1-(5-phospho-beta-D-ribosyl)imidazole-4-carboxamido]succinate + ADP + phosphate + 2 H(+). It functions in the pathway purine metabolism; IMP biosynthesis via de novo pathway; 5-amino-1-(5-phospho-D-ribosyl)imidazole-4-carboxamide from 5-amino-1-(5-phospho-D-ribosyl)imidazole-4-carboxylate: step 1/2. The protein is Phosphoribosylaminoimidazole-succinocarboxamide synthase of Gluconobacter oxydans (strain 621H) (Gluconobacter suboxydans).